Here is a 505-residue protein sequence, read N- to C-terminus: Maturase K (505 aa).

The protein belongs to the intron maturase 2 family. MatK subfamily.

It localises to the plastid. Its subcellular location is the chloroplast. Its function is as follows. Usually encoded in the trnK tRNA gene intron. Probably assists in splicing its own and other chloroplast group II introns. The polypeptide is Maturase K (Amaranthus greggii (Gregg's amaranth)).